We begin with the raw amino-acid sequence, 213 residues long: LexA repressor (213 aa).

The H-T-H motif DNA-binding region spans 31-51 (RAEISRELGFRSPNAAEEYLK). Residues Ser-129 and Lys-166 each act as for autocatalytic cleavage activity in the active site.

Belongs to the peptidase S24 family. In terms of assembly, homodimer.

It carries out the reaction Hydrolysis of Ala-|-Gly bond in repressor LexA.. In terms of biological role, represses a number of genes involved in the response to DNA damage (SOS response), including recA and lexA. In the presence of single-stranded DNA, RecA interacts with LexA causing an autocatalytic cleavage which disrupts the DNA-binding part of LexA, leading to derepression of the SOS regulon and eventually DNA repair. In Mannheimia succiniciproducens (strain KCTC 0769BP / MBEL55E), this protein is LexA repressor.